A 190-amino-acid chain; its full sequence is MLLSDRDLRAEISAGRLGIDPFDDSLVQPSSVDVRLDCMFRVFNNTRYTHIDPAQRQDELTSVVEPTKGDPFVLHPGEFVLGSTLEIFSLPGDLAGRLEGKSSLGRLGLLTHSTAGFIDPGFSGHITLELSNVANLPITLWPGMKIGQLCILKLTSPSEHPYGSSGVGSKYQGQRGPTPSRSYQNFIRST.

Residues 101–106, Asp-119, 127–129, Gln-148, Tyr-162, and Gln-174 each bind dCTP; these read KSSLGR and TLE. The Proton donor/acceptor role is filled by Glu-129. Residues 161-190 are disordered; that stretch reads PYGSSGVGSKYQGQRGPTPSRSYQNFIRST. The segment covering 171–190 has biased composition (polar residues); sequence YQGQRGPTPSRSYQNFIRST.

The protein belongs to the dCTP deaminase family. Homotrimer.

It carries out the reaction dCTP + 2 H2O = dUMP + NH4(+) + diphosphate. The protein operates within pyrimidine metabolism; dUMP biosynthesis; dUMP from dCTP: step 1/1. In terms of biological role, bifunctional enzyme that catalyzes both the deamination of dCTP to dUTP and the hydrolysis of dUTP to dUMP without releasing the toxic dUTP intermediate. This is dCTP deaminase, dUMP-forming from Mycobacterium marinum (strain ATCC BAA-535 / M).